Here is a 445-residue protein sequence, read N- to C-terminus: Trigger factor (445 aa).

Residues 163-248 (GDTVVIDYVG…IHEVKVKELP (86 aa)) enclose the PPIase FKBP-type domain. Positions 425-445 (KEVESAKDDADKEASDAKADK) are disordered.

It belongs to the FKBP-type PPIase family. Tig subfamily.

It localises to the cytoplasm. It catalyses the reaction [protein]-peptidylproline (omega=180) = [protein]-peptidylproline (omega=0). Its function is as follows. Involved in protein export. Acts as a chaperone by maintaining the newly synthesized protein in an open conformation. Functions as a peptidyl-prolyl cis-trans isomerase. The protein is Trigger factor of Lacticaseibacillus casei (strain BL23) (Lactobacillus casei).